The following is a 173-amino-acid chain: Translation initiation factor IF-3 (173 aa).

It belongs to the IF-3 family. In terms of assembly, monomer.

The protein resides in the cytoplasm. IF-3 binds to the 30S ribosomal subunit and shifts the equilibrium between 70S ribosomes and their 50S and 30S subunits in favor of the free subunits, thus enhancing the availability of 30S subunits on which protein synthesis initiation begins. The chain is Translation initiation factor IF-3 from Neisseria gonorrhoeae (strain ATCC 700825 / FA 1090).